The chain runs to 733 residues: DNA-binding protein SATB2 (733 aa).

Residues Met1–Pro47 are disordered. Ser20 is subject to Phosphoserine. Glycyl lysine isopeptide (Lys-Gly) (interchain with G-Cter in SUMO2) cross-links involve residues Lys24 and Lys30. A Phosphoserine modification is found at Ser39. The CMP domain occupies Gly57 to Ser158. A Glycyl lysine isopeptide (Lys-Gly) (interchain with G-Cter in SUMO2) cross-link involves residue Lys161. The CUTL domain maps to Lys161–Val234. A Glycyl lysine isopeptide (Lys-Gly) (interchain with G-Cter in SUMO) cross-link involves residue Lys233. A Glycyl lysine isopeptide (Lys-Gly) (interchain with G-Cter in SUMO); alternate cross-link involves residue Lys350. Lys350 is covalently cross-linked (Glycyl lysine isopeptide (Lys-Gly) (interchain with G-Cter in SUMO2); alternate). A DNA-binding region (CUT 1) is located at residues Lys350–Arg437. Positions Asp435–Pro473 are disordered. Positions Met441–Ser458 are enriched in low complexity. Ser454 carries the phosphoserine modification. Polar residues predominate over residues Arg459–Thr470. Thr467 carries the post-translational modification Phosphothreonine. Positions Pro473–Ser560 form a DNA-binding region, CUT 2. Lys475 participates in a covalent cross-link: Glycyl lysine isopeptide (Lys-Gly) (interchain with G-Cter in SUMO2). Disordered stretches follow at residues Gln580 to Ser617 and Asp691 to Arg733. Ser594 carries the phosphoserine modification. The segment at residues Pro615 to Gly674 is a DNA-binding region (homeobox). Residues Leu694 to Glu708 are compositionally biased toward acidic residues. Basic and acidic residues predominate over residues Glu709 to Arg733. Residue Lys724 forms a Glycyl lysine isopeptide (Lys-Gly) (interchain with G-Cter in SUMO2) linkage.

It belongs to the CUT homeobox family. Interacts with PIAS1. Interacts with ATF4 and RUNX2; resulting in enhanced DNA binding and transactivation by these transcription factors. Post-translationally, sumoylated by PIAS1. Sumoylation promotes nuclear localization, but represses transcription factor activity. As to expression, expressed in cortical neurons that extend axons across the corpus callosum. Also expressed in branchial arches and in cells of the osteoblast lineage, but not in chondrocytes and osteoclasts.

The protein resides in the nucleus matrix. In terms of biological role, binds to DNA, at nuclear matrix- or scaffold-associated regions. Thought to recognize the sugar-phosphate structure of double-stranded DNA. Transcription factor controlling nuclear gene expression, by binding to matrix attachment regions (MARs) of DNA and inducing a local chromatin-loop remodeling. Acts as a docking site for several chromatin remodeling enzymes and also by recruiting corepressors (HDACs) or coactivators (HATs) directly to promoters and enhancers. Required for the initiation of the upper-layer neurons (UL1) specific genetic program and for the inactivation of deep-layer neurons (DL) and UL2 specific genes, probably by modulating Bcl11b expression. Repressor of Ctip2 and regulatory determinant of corticocortical connections in the developing cerebral cortex. May play an important role in palate formation. Acts as a molecular node in a transcriptional network regulating skeletal development and osteoblast differentiation. In Mus musculus (Mouse), this protein is DNA-binding protein SATB2 (Satb2).